Reading from the N-terminus, the 873-residue chain is MGSLSRSEEMRFCQLIVEKDAAFNIVAEIGKQPYVQFKDLNPNVNSFQRTFVKDIRRYDEMERKLRFLESQIVKDEIVIPGRVDTGDYTILPTSELNTLEGTLTELEKDVKSMNDSDSQLKANFMDLKEWDAVLDKTDEFFQGGVDDQAQEELENLDEEGAVPRVEKGPVNYLVGIIRRERLNGFERVLWRACHHTAYIRSSDIEEELEDPGTGEKVHKSVFIIFLKGDRMRSIVEKVCDGFKAKLFKNCPKTFKERQSARNDVRARIQDLQTVLGQTREHRFRVLQAAANNHHQWLKQVRMIKTVFHMLNLFTFDGIGRFFVGECWIPLKHVEDVRKAIEVGAERSGSSVKPVLNILETSVTPPTYNETNKFTAVFQGIVDSYGIATYRELNPAPYTIITFPFLFSCMFGDLGHGCIMLMAGLWFVLREKNLQARNIKDEIFNMFFGGRYIILLMGLFSIHAGIIYNDMFAKSFNIFGSGWKNPYNASEIEGWINRTEHGKEMLVELAPEDAYDHAGGPYSFGVDPIWNIAENKLNFLNSMKMKLSVILGISQMTFGVILSFFNHTYNKSKIDIFTVFIPQMLFMGCIFMYLCLQIILKWLFFWTKEATVFGQIYPGSHCAPSLLIGLINMFMMKDRNAGFVVDGGKVNGEYREVETCYLSQWYPGQSVIEMILVVIAVICVPVMLFGKPIHHVMQQKKKAKELHGNATVRANVVSDSSEIVLNGGSKKEGAAHEEHGHGGHEDESFGDIMVHQAIHTIEYVLGCVSHTASYLRLWALSLAHAQLSEVLWHMVFVTGGLGISGTAGFIAVYVVFFIFFVLTISILVLMEGLSAFLHTLRLHWVEFQSKFYLGLGYPFVPYSFKTALQEAEAA.

Residues 1–407 (MGSLSRSEEM…TIITFPFLFS (407 aa)) are Cytoplasmic-facing. Residues 408 to 428 (CMFGDLGHGCIMLMAGLWFVL) form a helical membrane-spanning segment. Residues 429–445 (REKNLQARNIKDEIFNM) are Lumenal-facing. Residues 446 to 466 (FFGGRYIILLMGLFSIHAGII) form a helical membrane-spanning segment. Over 467–543 (YNDMFAKSFN…NKLNFLNSMK (77 aa)) the chain is Cytoplasmic. The chain crosses the membrane as a helical span at residues 544 to 564 (MKLSVILGISQMTFGVILSFF). 2 N-linked (GlcNAc...) asparagine glycosylation sites follow: Asn-565 and Asn-569. Residues 565–574 (NHTYNKSKID) are Lumenal-facing. A helical transmembrane segment spans residues 575–595 (IFTVFIPQMLFMGCIFMYLCL). The Cytoplasmic segment spans residues 596 to 614 (QIILKWLFFWTKEATVFGQ). Residues 615-635 (IYPGSHCAPSLLIGLINMFMM) traverse the membrane as a helical segment. At 636–668 (KDRNAGFVVDGGKVNGEYREVETCYLSQWYPGQ) the chain is on the lumenal side. A helical membrane pass occupies residues 669–689 (SVIEMILVVIAVICVPVMLFG). Residues 690 to 785 (KPIHHVMQQK…LWALSLAHAQ (96 aa)) are Cytoplasmic-facing. A helical membrane pass occupies residues 786 to 806 (LSEVLWHMVFVTGGLGISGTA). Residue Gly-807 is a topological domain, lumenal. A helical transmembrane segment spans residues 808-828 (FIAVYVVFFIFFVLTISILVL). The Cytoplasmic portion of the chain corresponds to 829–873 (MEGLSAFLHTLRLHWVEFQSKFYLGLGYPFVPYSFKTALQEAEAA).

It belongs to the V-ATPase 116 kDa subunit family. As to quaternary structure, V-ATPase is a heteromultimeric enzyme made up of two complexes: the ATP-hydrolytic V1 complex and the proton translocation V0 complex. The V1 complex consists of three catalytic AB heterodimers that form a heterohexamer, three peripheral stalks each consisting of EG heterodimers, one central rotor including subunits D and F, and the regulatory subunits C and H. The proton translocation complex V0 consists of the proton transport subunit a, a ring of proteolipid subunits c9c'', rotary subunit d, subunits e and f, and the accessory subunits vah-19/Ac45 and vah-20/PRR. Interacts with V-type proton ATPase subunit C vha-11. In terms of tissue distribution, expressed in the H-shaped excretory cell (at protein level). Expressed in hypodermal cells around the vulva. Expressed in the main epidermal syncytium. Expressed in the sheath cells associated with head and tail sensory organs; specifically, expressed in the apical sheath cells of the amphids and CEP neuron and in the sheath cells of the OLQ sensory organ.

The protein resides in the apical cell membrane. It localises to the endosome. The protein localises to the multivesicular body membrane. Functionally, subunit of the V0 complex of vacuolar(H+)-ATPase (V-ATPase), a multisubunit enzyme composed of a peripheral complex (V1) that hydrolyzes ATP and a membrane integral complex (V0) that translocates protons. V-ATPase is responsible for acidifying and maintaining the pH of intracellular compartments and in some cell types, is targeted to the plasma membrane, where it is responsible for acidifying the extracellular environment. Involved in the assembly of the V-ATPase complex. The V-ATPase is required for the function of the excretory canal. Independently of the V1 complex, the V0 complex of the V-ATPase is required for multivesicular body membrane fusion with the apical membrane of the epidermal cells during exosome release and thus regulates the release of cuticle components such as Hedgehog-related peptide wrt-2 but not collagen. Also, in the epidermis, regulates the trafficking of che-14 and rdy-2. Regulates the secretion of granular material found in the amphid channel and in controlling osmoregulation in the amphid pocket. This Caenorhabditis elegans protein is V-type proton ATPase 116 kDa subunit a 2.